Reading from the N-terminus, the 48-residue chain is uncharacterized protein (48 aa).

Residues 21-43 (SIFVSLGVFAVSVAILKSRLGNF) traverse the membrane as a helical segment.

It localises to the membrane. This is an uncharacterized protein from Schizosaccharomyces pombe (strain 972 / ATCC 24843) (Fission yeast).